The primary structure comprises 311 residues: Probable protein phosphatase 2C 59 (311 aa).

Residues 1-14 are compositionally biased toward low complexity; it reads MGYLNSVLSSSSQV. Positions 1–26 are disordered; the sequence is MGYLNSVLSSSSQVHSDDGPVSGGGL. Residues 33–279 enclose the PPM-type phosphatase domain; sequence SYGYASSPGK…DNITCVVVRF (247 aa). Mn(2+)-binding residues include Asp69, Gly70, Asp231, and Asp270.

Belongs to the PP2C family. Interacts with the Pseudomonas syringae pv. maculicola effector HopW1-1 (via C-terminus). The cofactor is Mg(2+). It depends on Mn(2+) as a cofactor.

The catalysed reaction is O-phospho-L-seryl-[protein] + H2O = L-seryl-[protein] + phosphate. The enzyme catalyses O-phospho-L-threonyl-[protein] + H2O = L-threonyl-[protein] + phosphate. Inhibited by sodium fluoride (NaF). Its function is as follows. Protein phosphatase that modulates defense response to pathogenic bacteria, conferring resistance and promoting salicylic acid (SA) accumulation. This is Probable protein phosphatase 2C 59 (WIN2) from Arabidopsis thaliana (Mouse-ear cress).